A 799-amino-acid chain; its full sequence is Phenylalanine--tRNA ligase beta subunit (799 aa).

Residues 40–147 (KSHLSSVITV…KDTTLGISVR (108 aa)) enclose the tRNA-binding domain. The B5 domain occupies 402–479 (SKTVTIETNL…RTIGYASIRT (78 aa)). Positions 457, 463, 466, and 467 each coordinate Mg(2+). The region spanning 707–799 (SHFPQGQLDL…TAKSNGYSLR (93 aa)) is the FDX-ACB domain.

The protein belongs to the phenylalanyl-tRNA synthetase beta subunit family. Type 1 subfamily. As to quaternary structure, tetramer of two alpha and two beta subunits. Requires Mg(2+) as cofactor.

The protein resides in the cytoplasm. It carries out the reaction tRNA(Phe) + L-phenylalanine + ATP = L-phenylalanyl-tRNA(Phe) + AMP + diphosphate + H(+). This Leptospira biflexa serovar Patoc (strain Patoc 1 / Ames) protein is Phenylalanine--tRNA ligase beta subunit.